Reading from the N-terminus, the 332-residue chain is uncharacterized protein (332 aa).

Positions 1–32 (MSRDRGARGLRKYGRFALATGAATALSLTASG) are cleaved as a signal peptide. Cys-33 is lipidated: N-palmitoyl cysteine. The S-diacylglycerol cysteine moiety is linked to residue Cys-33.

The protein resides in the cell membrane. This is an uncharacterized protein from Streptomyces avermitilis (strain ATCC 31267 / DSM 46492 / JCM 5070 / NBRC 14893 / NCIMB 12804 / NRRL 8165 / MA-4680).